Reading from the N-terminus, the 101-residue chain is MDPQSAVYSLPRVPTAAPPNAGVPWSHVGEVAVLSFVALICIYLLYLWVLRDLILVLKARRGRSTEELIFGSEAVDRRSPIPNTLEPTAPVHPGPFVPGSG.

Residues glutamate 30–leucine 50 traverse the membrane as a helical segment. The tract at residues arginine 78 to glycine 101 is disordered. The span at proline 90–glycine 101 shows a compositional bias: pro residues.

This sequence belongs to the mastrevirus movement protein family. Interacts with the capsid protein (CP). Part of a MP-CP-viral DNA complex.

It is found in the host membrane. Functionally, involved in the viral transport within, and between cells. This chain is Movement protein, found in Maize streak virus genotype E (isolate Pat) (MSV).